The primary structure comprises 624 residues: UvrABC system protein C (624 aa).

The GIY-YIG domain occupies 27–105 (LSPGVYRMLS…IKSLGPRYNI (79 aa)). Residues 215–250 (RRVQHDLTARMESAAEAMEYEAAAVFRDRIRALTRI) form the UVR domain.

The protein belongs to the UvrC family. Interacts with UvrB in an incision complex.

The protein localises to the cytoplasm. The UvrABC repair system catalyzes the recognition and processing of DNA lesions. UvrC both incises the 5' and 3' sides of the lesion. The N-terminal half is responsible for the 3' incision and the C-terminal half is responsible for the 5' incision. The sequence is that of UvrABC system protein C from Paramagnetospirillum magneticum (strain ATCC 700264 / AMB-1) (Magnetospirillum magneticum).